Here is a 485-residue protein sequence, read N- to C-terminus: Peptidyl-prolyl cis-trans isomerase-like 4 (485 aa).

Residues 1–172 enclose the PPIase cyclophilin-type domain; the sequence is MSVLLETSAG…IDIRIKHTVI (172 aa). Residues 251–329 form the RRM domain; that stretch reads NVLFVCKLNP…RRIHVDFSQS (79 aa). Positions 377–485 are disordered; that stretch reads NYRMVYGEEE…RDENDRRSRR (109 aa). Positions 426-485 are enriched in basic and acidic residues; that stretch reads RPRDRSRDRYHKPRDDRRGDRRDRDRRDQDRNRYRDRDHRDRGREKDRYGRDENDRRSRR.

Belongs to the cyclophilin-type PPIase family. PPIL4 subfamily.

The protein localises to the nucleus. It catalyses the reaction [protein]-peptidylproline (omega=180) = [protein]-peptidylproline (omega=0). Its function is as follows. PPIases accelerate the folding of proteins. It catalyzes the cis-trans isomerization of proline imidic peptide bonds in oligopeptides. This Gibberella zeae (strain ATCC MYA-4620 / CBS 123657 / FGSC 9075 / NRRL 31084 / PH-1) (Wheat head blight fungus) protein is Peptidyl-prolyl cis-trans isomerase-like 4 (CYP6).